The following is a 225-amino-acid chain: Holliday junction branch migration complex subunit RuvA (225 aa).

Positions Met1–Thr71 are domain I. A domain II region spans residues Ser72 to Ser150. Residues Lys151 to Ile161 form a flexible linker region. The segment at Ile161 to Arg225 is domain III.

The protein belongs to the RuvA family. In terms of assembly, homotetramer. Forms an RuvA(8)-RuvB(12)-Holliday junction (HJ) complex. HJ DNA is sandwiched between 2 RuvA tetramers; dsDNA enters through RuvA and exits via RuvB. An RuvB hexamer assembles on each DNA strand where it exits the tetramer. Each RuvB hexamer is contacted by two RuvA subunits (via domain III) on 2 adjacent RuvB subunits; this complex drives branch migration. In the full resolvosome a probable DNA-RuvA(4)-RuvB(12)-RuvC(2) complex forms which resolves the HJ.

The protein resides in the cytoplasm. Functionally, the RuvA-RuvB-RuvC complex processes Holliday junction (HJ) DNA during genetic recombination and DNA repair, while the RuvA-RuvB complex plays an important role in the rescue of blocked DNA replication forks via replication fork reversal (RFR). RuvA specifically binds to HJ cruciform DNA, conferring on it an open structure. The RuvB hexamer acts as an ATP-dependent pump, pulling dsDNA into and through the RuvAB complex. HJ branch migration allows RuvC to scan DNA until it finds its consensus sequence, where it cleaves and resolves the cruciform DNA. The chain is Holliday junction branch migration complex subunit RuvA from Prochlorococcus marinus (strain MIT 9301).